The primary structure comprises 1335 residues: Bifunctional autolysin (1335 aa).

A signal peptide spans methionine 1–alanine 29. 3 disordered regions span residues glutamine 51–threonine 88, asparagine 100–glutamate 262, and tryptophan 514–leucine 535. 5 stretches are compositionally biased toward polar residues: residues glutamate 58–threonine 88, asparagine 100–asparagine 127, threonine 143–alanine 155, threonine 176–glycine 223, and serine 244–tyrosine 258. The interval valine 303–lysine 863 is N-acetylmuramoyl-L-alanine amidase. Over residues glycine 515 to threonine 531 the composition is skewed to low complexity. GW domains are found at residues asparagine 533–alanine 610, alanine 612–lysine 686, threonine 700–alanine 774, serine 776–lysine 850, serine 868–isoleucine 943, lysine 945–threonine 1020, and glutamine 1023–isoleucine 1096. The segment at glutamine 864–lysine 1335 is endo-beta-N-acetylglucosaminidase.

This sequence in the N-terminal section; belongs to the N-acetylmuramoyl-L-alanine amidase 2 family. It in the C-terminal section; belongs to the glycosyl hydrolase 73 family. In terms of assembly, oligomer; forms a ring structure at the cell surface which is important for efficient partitioning of daughter cells after cell division. Post-translationally, undergoes proteolytic processing to generate the two extracellular lytic enzymes, probably at the septal region on the cell surface.

The protein resides in the secreted. It catalyses the reaction Hydrolyzes the link between N-acetylmuramoyl residues and L-amino acid residues in certain cell-wall glycopeptides.. The enzyme catalyses an N(4)-(oligosaccharide-(1-&gt;3)-[oligosaccharide-(1-&gt;6)]-beta-D-Man-(1-&gt;4)-beta-D-GlcNAc-(1-&gt;4)-alpha-D-GlcNAc)-L-asparaginyl-[protein] + H2O = an oligosaccharide-(1-&gt;3)-[oligosaccharide-(1-&gt;6)]-beta-D-Man-(1-&gt;4)-D-GlcNAc + N(4)-(N-acetyl-beta-D-glucosaminyl)-L-asparaginyl-[protein]. Functionally, endohydrolysis of the di-N-acetylchitobiosyl unit in high-mannose glycopeptides and glycoproteins containing the -[(Man)5(GlcNAc)2]-Asn structure. One N-acetyl-D-glucosamine residue remains attached to the protein; the rest of the oligosaccharide is released intact. Cleaves the peptidoglycan connecting the daughter cells at the end of the cell division cycle, resulting in the separation of the two newly divided cells. Acts as an autolysin in penicillin-induced lysis. The polypeptide is Bifunctional autolysin (atl) (Staphylococcus epidermidis (strain ATCC 12228 / FDA PCI 1200)).